The chain runs to 484 residues: MSFETPDFSLALPEIWLLAATCGVLVVDLFSSDPRRSATFYLTQGALLVTAVLALSTQWGVNEVTFSGHYMADSLGAVVKASVALLSVLALAYTRPYLGDRGLLQGEFYLLALFANLGMLVIASGGSLLSLYLGLELLSLALYALVAYHRDSRQAAEAAMKYFVLGSLASGILLYGMSMVYGATASLELSVIAEVAGRHSDPLMLLFGVVFMLVGVAFKLGAAPFHAWVPDVYQGAPTPVTLFLSTAPKVAAVALFMRLLVDGLGPMHEQLEPMLMILAVASLLVGNLIAIVQTNFKRMLAYSAIAHAGFIMVGFTAGTDAGHAAALFYTIAYSIMAAGAFGMITVLARSGFEAEEIADLRGLNERHPVYAGVLLLVLVSMTGIPGTVGFYAKYLVLQAAVEAGHIPLAIFAVVAAVVGAFYYLRVLKVVYFDRPEAEVDADTLPAPGASSAIRSLVVVNGVAVLVLGIFPERLIALCQAALGL.

Transmembrane regions (helical) follow at residues 10–30 (LALP…VDLF), 40–60 (FYLT…TQWG), 74–94 (SLGA…LAYT), 108–128 (FYLL…GGSL), 129–149 (LSLY…VAYH), 163–183 (FVLG…VYGA), 203–223 (LMLL…LGAA), 237–257 (PTPV…ALFM), 272–292 (EPML…IAIV), 299–319 (MLAY…TAGT), 327–347 (LFYT…ITVL), 370–390 (YAGV…TVGF), and 404–424 (GHIP…FYYL).

The protein belongs to the complex I subunit 2 family. In terms of assembly, NDH-1 is composed of 14 different subunits. Subunits NuoA, H, J, K, L, M, N constitute the membrane sector of the complex.

It localises to the cell inner membrane. The catalysed reaction is a quinone + NADH + 5 H(+)(in) = a quinol + NAD(+) + 4 H(+)(out). In terms of biological role, NDH-1 shuttles electrons from NADH, via FMN and iron-sulfur (Fe-S) centers, to quinones in the respiratory chain. The immediate electron acceptor for the enzyme in this species is believed to be ubiquinone. Couples the redox reaction to proton translocation (for every two electrons transferred, four hydrogen ions are translocated across the cytoplasmic membrane), and thus conserves the redox energy in a proton gradient. The chain is NADH-quinone oxidoreductase subunit N from Halorhodospira halophila (strain DSM 244 / SL1) (Ectothiorhodospira halophila (strain DSM 244 / SL1)).